A 382-amino-acid chain; its full sequence is ATP phosphoribosyltransferase regulatory subunit (382 aa).

This sequence belongs to the class-II aminoacyl-tRNA synthetase family. HisZ subfamily. Heteromultimer composed of HisG and HisZ subunits.

The protein resides in the cytoplasm. The protein operates within amino-acid biosynthesis; L-histidine biosynthesis; L-histidine from 5-phospho-alpha-D-ribose 1-diphosphate: step 1/9. Functionally, required for the first step of histidine biosynthesis. May allow the feedback regulation of ATP phosphoribosyltransferase activity by histidine. This is ATP phosphoribosyltransferase regulatory subunit from Burkholderia ambifaria (strain ATCC BAA-244 / DSM 16087 / CCUG 44356 / LMG 19182 / AMMD) (Burkholderia cepacia (strain AMMD)).